The following is a 194-amino-acid chain: Probable GTP-binding protein EngB (194 aa).

The EngB-type G domain maps to 23-194 (LNGEFVFVGR…YELIEIFGGV (172 aa)). Residues 31 to 38 (GRSNVGKS), 57 to 61 (GKTAS), 75 to 78 (DLPG), 143 to 146 (TKMD), and 173 to 175 (YSA) each bind GTP. Mg(2+) contacts are provided by serine 38 and threonine 59.

The protein belongs to the TRAFAC class TrmE-Era-EngA-EngB-Septin-like GTPase superfamily. EngB GTPase family. The cofactor is Mg(2+).

Functionally, necessary for normal cell division and for the maintenance of normal septation. This is Probable GTP-binding protein EngB from Thermosipho africanus (strain TCF52B).